Reading from the N-terminus, the 434-residue chain is Oxysterol-binding protein homolog 5 (434 aa).

Residues 18-371 (SSFNGDLSSL…KQVDYMNENT (354 aa)) form an OSBP-related domain (ORD) region. A 1,2-diacyl-sn-glycero-3-phospho-(1D-myo-inositol 4-phosphate) is bound at residue 24-29 (LSSLSA). Residue Gln96 participates in 20-hydroxycholesterol binding. Residue Gln96 participates in 25-hydroxycholesterol binding. The 7beta-hydroxycholesterol site is built by Gln96 and Arg100. Gln96 serves as a coordination point for cholesterol. Gln96 contacts ergosterol. A 1,2-diacyl-sn-glycero-3-phospho-(1D-myo-inositol 4-phosphate) is bound by residues 109 to 112 (KPLN), 143 to 144 (HH), Lys335, Glu339, and Arg343. Residue Ser389 is modified to Phosphoserine.

The protein belongs to the OSBP family.

It localises to the vacuole membrane. It is found in the bud neck. Lipid transport protein (LTP) involved in non-vesicular transfer of lipids between membranes. Functions in phosphoinositide-coupled directional transport of various lipids by carrying the lipid molecule in a hydrophobic pocket and transferring it between membranes through the cytosol. Involved in maintenance of intracellular sterol distribution and homeostasis. Plays a role in ergosterol synthesis. Binds and transports sterol. May be involved in ergosterol transport from the plasma membrane (PM) to the ER. This chain is Oxysterol-binding protein homolog 5, found in Saccharomyces cerevisiae (strain ATCC 204508 / S288c) (Baker's yeast).